Here is a 109-residue protein sequence, read N- to C-terminus: Fluoride-specific ion channel FluC (109 aa).

3 helical membrane passes run 21–41 (LTLNNNFFISIIGSFLVGFFV), 52–72 (ILFSGFFSCFTSFSGFIYFLY), and 84–104 (IIFFNLIIILNLLTMIFGFWI).

This sequence belongs to the fluoride channel Fluc/FEX (TC 1.A.43) family.

Its subcellular location is the cell inner membrane. It catalyses the reaction fluoride(in) = fluoride(out). In terms of biological role, fluoride-specific ion channel. Important for reducing fluoride concentration in the cell, thus reducing its toxicity. The protein is Fluoride-specific ion channel FluC of Prochlorococcus marinus (strain MIT 9301).